The chain runs to 138 residues: Actophorin (138 aa).

Serine 2 is subject to Blocked amino end (Ser). An ADF-H domain is found at 3 to 134 (GIAVSDDCVQ…SEDAVSERAK (132 aa)).

This sequence belongs to the actin-binding proteins ADF family. In terms of assembly, monomer.

The protein localises to the cytoplasm. In terms of biological role, forms a one to one complex with monomeric actin. Can regulate the pool available for polymerization. Severs actin filaments in a dose-dependent manner. In Acanthamoeba castellanii (Amoeba), this protein is Actophorin.